A 123-amino-acid chain; its full sequence is uncharacterized protein (123 aa).

Residues 5 to 25 (GTLVILFAIILILCIMLLFYY) traverse the membrane as a helical segment.

It belongs to the asfivirus CP123L family.

It localises to the host membrane. Its subcellular location is the virion. This is an uncharacterized protein from Ornithodoros (relapsing fever ticks).